The following is a 553-amino-acid chain: MMPRMTGKADLNTLVHKLHPLEIKVLKNCAMDEILSTSLLISRLGFKEGHANQAFSWLRAKRIIEEHQREQMRSFELTPCGYAAASDGTAEERMLTFLSSPPSLTAIADAAEHLHPRPPLCNGLSLPELAHALTLAPKDVGSAFGILAQEGILRMDGEKRIHIVSPHVSDRMSLTRTLLQRAAARVASPSEASDTPPGTLFESELSDDERRVMERIAKKRGASDSLFKVSVRERVTFTFTPTARAVQEALHTAGLTGNEIGALTVECLKSGAWKTQHLRRYNVHIPPARIIPGRSNAYADFLEHIKDRLVALGFQEFDGPLVETDFWNADALFMPQFHPARDIHDVYYLKHPTHAPTIPEPFLSRVAATHERGADSGSLGWRYSFDRDFTRRLLLRSQGTALSARHLPTAHIPGKYFGIARCFRHDQVDATHLADFYQTEGIVLGTDVNVCTLLGMLKILATEIAGAQEVRYVGGYFPFTEPSIELHALHPALGWFELGGAGLLRPEVTDPLGVHVPVMAWGLGVDRMALLALGISDVRELFSPDIESVRLRV.

L-phenylalanine-binding residues include threonine 400 and phenylalanine 479. Residue glutamate 481 coordinates Mg(2+).

Belongs to the class-II aminoacyl-tRNA synthetase family. Phe-tRNA synthetase alpha subunit type 2 subfamily. Tetramer of two alpha and two beta subunits. It depends on Mg(2+) as a cofactor.

The protein resides in the cytoplasm. It catalyses the reaction tRNA(Phe) + L-phenylalanine + ATP = L-phenylalanyl-tRNA(Phe) + AMP + diphosphate + H(+). In Treponema pallidum (strain Nichols), this protein is Phenylalanine--tRNA ligase alpha subunit.